The chain runs to 101 residues: Small ribosomal subunit protein uS14 (101 aa).

Belongs to the universal ribosomal protein uS14 family. In terms of assembly, part of the 30S ribosomal subunit. Contacts proteins S3 and S10.

Binds 16S rRNA, required for the assembly of 30S particles and may also be responsible for determining the conformation of the 16S rRNA at the A site. The polypeptide is Small ribosomal subunit protein uS14 (Chelativorans sp. (strain BNC1)).